The following is a 141-amino-acid chain: Hemoglobin subunit alpha (141 aa).

A Globin domain is found at 1–141 (VLSPADKTNV…VSTVLTSKYR (141 aa)). A Phosphoserine modification is found at Ser3. At Lys7 the chain carries N6-succinyllysine. Phosphothreonine is present on Thr8. Lys11 carries the N6-succinyllysine modification. Lys16 carries the N6-acetyllysine; alternate modification. Lys16 is modified (N6-succinyllysine; alternate). The residue at position 24 (Tyr24) is a Phosphotyrosine. Residue Ser35 is modified to Phosphoserine. Lys40 is modified (N6-succinyllysine). O2 is bound at residue His58. Heme b is bound at residue His87. Residue Ser102 is modified to Phosphoserine. The residue at position 108 (Thr108) is a Phosphothreonine. Phosphoserine occurs at positions 124 and 131. A phosphothreonine mark is found at Thr134 and Thr137. Ser138 carries the post-translational modification Phosphoserine.

The protein belongs to the globin family. In terms of assembly, heterotetramer of two alpha chains and two beta chains. In terms of tissue distribution, red blood cells.

Involved in oxygen transport from the lung to the various peripheral tissues. In terms of biological role, hemopressin acts as an antagonist peptide of the cannabinoid receptor CNR1. Hemopressin-binding efficiently blocks cannabinoid receptor CNR1 and subsequent signaling. The polypeptide is Hemoglobin subunit alpha (HBA) (Cynopterus sphinx (Indian short-nosed fruit bat)).